The following is a 691-amino-acid chain: Choline transporter-like 1 (691 aa).

Residues 1-10 (MGCAESKDGE) show a composition bias toward basic and acidic residues. The tract at residues 1-20 (MGCAESKDGEGEAQNNRPKY) is disordered. The next 3 membrane-spanning stretches (helical) occupy residues 28–48 (WLAIYIIFWLFLIVIAIFSFV), 205–225 (WHIIAMVCGLALLISIALVTM), and 232–252 (IVSWIICVLVIVASVALTVAL). N-linked (GlcNAc...) asparagine glycosylation occurs at Asn-261. 2 helical membrane passes run 282–302 (VLTLAVLATITMIILIVVIYF) and 332–352 (LLAFLVLIAFLSFWVAVIICL). A glycan (N-linked (GlcNAc...) asparagine) is linked at Asn-385. The next 4 helical transmembrane spans lie at 408–428 (SMFWIYVVGLIWTVEFIFACQ), 527–547 (VVAIESINFCPAAGIAWNAMA), 562–582 (FILFLGKVVVAALSGLIGIVL), and 591–611 (FYMAPVIIIIIFSFFIAHIIL).

The protein belongs to the CTL (choline transporter-like) family.

The protein localises to the membrane. The sequence is that of Choline transporter-like 1 from Drosophila melanogaster (Fruit fly).